The following is a 588-amino-acid chain: Probable basic-leucine zipper transcription factor M (588 aa).

Residues 127 to 157 are a coiled coil; that stretch reads QVEQQQEQEQEQEQQQKQQQQQYIEKQIQEI. The span at 221–240 shows a compositional bias: low complexity; sequence QQNHIDNQSLNNSNTKTSKN. The segment at 221–250 is disordered; that stretch reads QQNHIDNQSLNNSNTKTSKNQQKDNNLPKK. Positions 263 to 326 constitute a bZIP domain; it reads NNNNIEKKRD…GSNLMRPEPE (64 aa). Residues 269-289 are basic motif; sequence KKRDQTESSKNFREKKKEYVK. The leucine-zipper stretch occupies residues 291–312; sequence IESKILALTLENDKLKKENDSL.

Belongs to the bZIP family.

The protein localises to the nucleus. Probable transcriptional regulator. The polypeptide is Probable basic-leucine zipper transcription factor M (bzpM) (Dictyostelium discoideum (Social amoeba)).